A 93-amino-acid chain; its full sequence is MRTLTLLITLLLLALHTQAESPQERAKAAPDQDMVMEDQDIFISFGGYKGTVLQDAVVKAGQACYCRIGACVSGERLTGACGLNGRIYRLCCR.

The N-terminal stretch at 1-19 (MRTLTLLITLLLLALHTQA) is a signal peptide. A propeptide spanning residues 20 to 62 (ESPQERAKAAPDQDMVMEDQDIFISFGGYKGTVLQDAVVKAGQ) is cleaved from the precursor. 3 cysteine pairs are disulfide-bonded: Cys64–Cys92, Cys66–Cys81, and Cys71–Cys91.

It belongs to the alpha-defensin family. In terms of tissue distribution, expressed in neutrophils (at protein level). Highest expression in bone marrow and to a much lesser extent in small intestine.

Its subcellular location is the secreted. In terms of biological role, host-defense peptide that has antimicrobial activity against Gram-positive and Gram-negative bacteria and fungi (in vitro). Exhibits activity against E.coli, A.calcoaceticus, S,aureus and C.albicans. In Rattus norvegicus (Rat), this protein is Defensin alpha 4.